The following is a 119-amino-acid chain: Ribosome-binding factor A (119 aa).

The protein belongs to the RbfA family. In terms of assembly, monomer. Binds 30S ribosomal subunits, but not 50S ribosomal subunits or 70S ribosomes.

The protein resides in the cytoplasm. In terms of biological role, one of several proteins that assist in the late maturation steps of the functional core of the 30S ribosomal subunit. Associates with free 30S ribosomal subunits (but not with 30S subunits that are part of 70S ribosomes or polysomes). Required for efficient processing of 16S rRNA. May interact with the 5'-terminal helix region of 16S rRNA. This chain is Ribosome-binding factor A, found in Buchnera aphidicola subsp. Acyrthosiphon pisum (strain Tuc7).